A 241-amino-acid polypeptide reads, in one-letter code: MRLRVDLLPHGNYPDVVLVVDVLRATTTAVTYLERGADALLLTATPEVALGLRGAAGEGGVLLGGERGGLPIPGFDFGNSPVEAAAQNFTGRVVVMNTTNGTGAAHIAAQTGKHVLLAALTNAHAAARRARALASEEIAIVCAGTDARVGLEDVYAAGVLAEYLLALGEFRIDDGARIALTIRRNAGDPLEALSSSGHGQHLVGLGLGDDVRYAAQVSTSTVVPVLDATQTTPEVLRFVGG.

It belongs to the ComB family. Mg(2+) is required as a cofactor.

It carries out the reaction (2R)-O-phospho-3-sulfolactate + H2O = (2R)-3-sulfolactate + phosphate. The protein is Probable 2-phosphosulfolactate phosphatase of Deinococcus geothermalis (strain DSM 11300 / CIP 105573 / AG-3a).